The following is a 1140-amino-acid chain: MSYNYVVTAQKPTAVNACVTGHFTSEDDLNLLIAKNTRLEIYVVTPEGLRPVKEVGMYGKIAVMELFRPKGESKDLLFILTAKYNACILEYKQSGDSIDIITRAHGNVQDRIGRPSETGIIGIIDPDCRMIGLRLYDGLFKVIPLERDNKELKAFNIRLEELHVIDVKFLYSCQAPTICFVYQDPQGRHVKTYEVSLREKEFSKGPWKQENVEAEASMVIAVPEPFGGAIIIGQESITYHNGDKYLAIAPPIIKQSTIVCHNRVDVNGSRYLLGDMEGRLFMLLLEKEEQMDGSVTLKDLRVELLGETSIAECLTYLDNGVVFVGSRLGDSQLVKLTTESNEQGSYVVVMETFTNLGPIVDMCVVDLERQGQGQLVTCSGAFKEGSLRIIRNGIGIHEHASIDLPGIKGLWPLRVAADRDTDDTLVLSFVGQTRVLTLTGEEVEETDLAGFVDDQQTFFCGNVAHQQLIQITSASVRLVSQNPQNLVSEWKEPQGRKVSVCSCNSRQVLLAVGRVLYYLEIHPGELRQTSCTEMEHEVACLDVTPLGGNDTLSSLCAIGLWTDISARILSLPGFQLLHKEMLGGEIIPRSILMTSFESSHYLLCALGDGALFYFSLNTDTGLLSDRKKVTLGTQPTVLRTFRSLSTTNVFACSDRPTVIYSSNHKLVFSNVNLKEVNYMCPLNSEGYPDSLALANNSTLTIGTIDEIQKLHIRTVPLFESPRKICYQEVSQCFGVLSSRIEVQDASGGSSPLRPSASTQALSSSVSCSKLFSGSTSPHETSFGEEVEVHNLLIIDQHTFEVLHTHQFLQNEYTLSLVSCKLGKDPTTYFVVGTAMVYPDEAEPKQGRIVVFQYNDGKLQTVAEKEVKGAVYSMVEFNGKLLASINSTVRLYEWTAEKELRTECNHYNNIMALYLKTKGDFILVGDLMRSVLLLAYKPMEGNFEEIARDFNPNWMSAVEILDDDNFLGAENAFNLFVCQKDSAATTDEERQHLQEVGLFHLGEFVNVFCHGSLVMQNLGETSPPTQGSVLFGTVNGMIGLVTSLSESWYNLLLDVQNRLNKVIKSVGKIEHSFWRSFHTERKTEPATGFIDGDLIESFLDISRPKMQEVIANLQIDDGSGMKRETTVDDLIKVVEELTRIH.

The interval 13-356 (TAVNACVTGH…VVVMETFTNL (344 aa)) is WD repeat beta-propeller A. The interval 391–708 (RNGIGIHEHA…LTIGTIDEIQ (318 aa)) is WD repeat beta-propeller B; Interaction with CUL4A. Residues 709 to 1043 (KLHIRTVPLF…NGMIGLVTSL (335 aa)) form a WD repeat beta-propeller C region.

Belongs to the DDB1 family. Component of the UV-DDB complex which includes ddb1 and ddb2. Component of numerous DCX (DDB1-CUL4-X-box) E3 ubiquitin-protein ligase complexes which consist of a core of ddb1, cul4a or cul4b and rbx1, and a substrate receptor, such as CRBN. DDB1 may recruit specific substrate targeting subunits to the DCX complex. These substrate targeting subunits are generally known as DCAF (DDB1- and CUL4-associated factor) or CDW (CUL4-DDB1-associated WD40-repeat) proteins.

Its subcellular location is the cytoplasm. The protein resides in the nucleus. The protein operates within protein modification; protein ubiquitination. In terms of biological role, protein, which is both involved in DNA repair and protein ubiquitination, as part of the UV-DDB complex and DCX (DDB1-CUL4-X-box) complexes, respectively. Core component of the UV-DDB complex (UV-damaged DNA-binding protein complex), a complex that recognizes UV-induced DNA damage and recruit proteins of the nucleotide excision repair pathway (the NER pathway) to initiate DNA repair. The UV-DDB complex may recognize UV-induced DNA damage and recruit proteins of the nucleotide excision repair pathway (the NER pathway) to initiate DNA repair. Also functions as a component of numerous distinct DCX (DDB1-CUL4-X-box) E3 ubiquitin-protein ligase complexes which mediate the ubiquitination and subsequent proteasomal degradation of target proteins. The functional specificity of the DCX E3 ubiquitin-protein ligase complex is determined by the variable substrate recognition component recruited by DDB1. May play a role in the regulation of the circadian clock. The polypeptide is DNA damage-binding protein 1 (ddb1) (Xenopus laevis (African clawed frog)).